The primary structure comprises 619 residues: MKMATPANPLRDPNTLSNYNKFRTVHTSVNFEIRFDQKRLVGNVIHRLKSLTNAESKEVILDSSYLEVKSVKVNGEAAEWQLLPRFEPYGSPLKISLEQAIPLDELIEVDISVNTTEKCTALQWLNPEQTSNGKHPYMFSQCQAIHARAIFPCQDTPDVKATFDFNLSSPLPVIASGVPVKQDASPPQSSGSIYYRFEQKVPIPSYLFAIASGDIAQAQIGPRSHVAVSPDRLDECKWELEGDTERFLQTIGNIIFPYVWGEYNVLILPPSFPYGGMENPVYTFATPSIISKDRQNVDVIAHEISHSWSGNLVTNCSWEHFWLNEGWTTYLERRIQAAIHGEPYRHFSAIIGWKHLVDSVERHGDTHEFTKLVVDLKGKDPDDAFSSVPYEKGFTFIFHLENLIGKDKFDKFIPHYFTRFRGKSLDSYEFKSCILDFFASDEESHVLLNKLDWDSWFYKPGLPPKPSFDTSLVDVVYELANKWKYISQSSFSPKASDMDGLVANQIVVFLEQVLLFDNPLTPEQSRFMGQVYNFAQSQNIEVSYLYLQVGLKAGDDSIVEPTIKLLGEIGRMKFVRPLYRTLEKFNRDIAVDTFEKHKNFYHPICRGLLEKDLFGDKGA.

A peptide-binding positions include 141–143 (QCQ) and 273–278 (PYGGME). Residue His-302 coordinates Zn(2+). Residue Glu-303 is the Proton acceptor of the active site. Zn(2+) contacts are provided by His-306 and Glu-325. The active-site Proton donor is Tyr-390.

This sequence belongs to the peptidase M1 family. Zn(2+) serves as cofactor.

Its subcellular location is the cytoplasm. The protein localises to the nucleus. It catalyses the reaction an epoxide + H2O = an ethanediol. Aminopeptidase that preferentially cleaves di- and tripeptides. Also has low epoxide hydrolase activity (in vitro). Can hydrolyze the epoxide leukotriene LTA(4) but it forms preferentially 5,6-dihydroxy-7,9,11,14-eicosatetraenoic acid rather than the cytokine leukotriene B(4) as the product compared to the homologous mammalian enzyme (in vitro). This Coccidioides immitis (strain RS) (Valley fever fungus) protein is Leucine aminopeptidase 2.